The chain runs to 792 residues: Oxidoreductase cns1 (792 aa).

As to quaternary structure, interacts with cns2.

The protein localises to the lipid droplet. It functions in the pathway secondary metabolite biosynthesis. In terms of biological role, oxidoreductase; part of the gene cluster that mediates the biosynthesis of cordycepin (COR) and pentostatin (PTN), two adenosine analogs with related bioactivity profiles as both mimic adenosine and can inhibit some of the processes that are adenosine dependent. Within the pathway, cns1 catalyzes the last step by converting the cns2 product 2'-carbonyl-3'-deoxyadenosine (2'-C-3'-dA) into cordycepin (3'-deoxyadenosine). The first step of cordycepin biosynthesis involves hydroxyl phosphorylation of the 3'-OH position on adenosine to produce adenosine-3'-monophosphate (3'-AMP), catalyzed by kinase activity of cns3. Next, 3'-AMP is dephosphorylated to 2'-carbonyl-3'-deoxyadenosine by cns2, which is finally converted to cordycepin by the oxidoreductase cns1. Pentostatin production is mediated by the ATP phosphoribosyltransferase activity of cns3 on adenosine to inhibit the activity of adenosine deaminase (ADA) to prevent COR deamination to 3'-deoxyinosine (3'-dI). The protein is Oxidoreductase cns1 of Cordyceps militaris (strain CM01) (Caterpillar fungus).